Here is a 158-residue protein sequence, read N- to C-terminus: NAD(P)H-quinone oxidoreductase subunit J, chloroplastic (158 aa).

It belongs to the complex I 30 kDa subunit family. As to quaternary structure, NDH is composed of at least 16 different subunits, 5 of which are encoded in the nucleus.

It localises to the plastid. Its subcellular location is the chloroplast thylakoid membrane. It carries out the reaction a plastoquinone + NADH + (n+1) H(+)(in) = a plastoquinol + NAD(+) + n H(+)(out). The catalysed reaction is a plastoquinone + NADPH + (n+1) H(+)(in) = a plastoquinol + NADP(+) + n H(+)(out). Its function is as follows. NDH shuttles electrons from NAD(P)H:plastoquinone, via FMN and iron-sulfur (Fe-S) centers, to quinones in the photosynthetic chain and possibly in a chloroplast respiratory chain. The immediate electron acceptor for the enzyme in this species is believed to be plastoquinone. Couples the redox reaction to proton translocation, and thus conserves the redox energy in a proton gradient. The chain is NAD(P)H-quinone oxidoreductase subunit J, chloroplastic from Aethionema grandiflorum (Persian stone-cress).